A 276-amino-acid polypeptide reads, in one-letter code: NAD-capped RNA hydrolase NudC (276 aa).

Substrate is bound at residue arginine 82. Residues cysteine 112 and cysteine 115 each coordinate Zn(2+). Glutamate 125 serves as a coordination point for substrate. Zn(2+) is bound by residues cysteine 130 and cysteine 133. Tyrosine 138 is a binding site for substrate. Residues 139 to 262 form the Nudix hydrolase domain; it reads PRISPSMIVL…SIARYLIDVY (124 aa). Positions 172, 188, and 192 each coordinate a divalent metal cation. Residues 173–194 carry the Nudix box motif; sequence GFAEPGESAEDCLIREVREEVQ. A substrate-binding site is contributed by 206–213; the sequence is QCWPFPHS. Glutamate 233 contributes to the a divalent metal cation binding site. Alanine 255 contacts substrate.

It belongs to the Nudix hydrolase family. NudC subfamily. Homodimer. Mg(2+) serves as cofactor. The cofactor is Mn(2+). Zn(2+) is required as a cofactor.

The enzyme catalyses a 5'-end NAD(+)-phospho-ribonucleoside in mRNA + H2O = a 5'-end phospho-adenosine-phospho-ribonucleoside in mRNA + beta-nicotinamide D-ribonucleotide + 2 H(+). It carries out the reaction NAD(+) + H2O = beta-nicotinamide D-ribonucleotide + AMP + 2 H(+). The catalysed reaction is NADH + H2O = reduced beta-nicotinamide D-ribonucleotide + AMP + 2 H(+). In terms of biological role, mRNA decapping enzyme that specifically removes the nicotinamide adenine dinucleotide (NAD) cap from a subset of mRNAs by hydrolyzing the diphosphate linkage to produce nicotinamide mononucleotide (NMN) and 5' monophosphate mRNA. The NAD-cap is present at the 5'-end of some mRNAs and stabilizes RNA against 5'-processing. Has preference for mRNAs with a 5'-end purine. Catalyzes the hydrolysis of a broad range of dinucleotide pyrophosphates. In Pseudomonas fluorescens (strain Pf0-1), this protein is NAD-capped RNA hydrolase NudC.